Here is an 80-residue protein sequence, read N- to C-terminus: UPF0248 protein M1425_2629 (80 aa).

Belongs to the UPF0248 family.

This chain is UPF0248 protein M1425_2629, found in Saccharolobus islandicus (strain M.14.25 / Kamchatka #1) (Sulfolobus islandicus).